A 122-amino-acid polypeptide reads, in one-letter code: Large ribosomal subunit protein uL14 (122 aa).

This sequence belongs to the universal ribosomal protein uL14 family. As to quaternary structure, part of the 50S ribosomal subunit. Forms a cluster with proteins L3 and L19. In the 70S ribosome, L14 and L19 interact and together make contacts with the 16S rRNA in bridges B5 and B8.

Functionally, binds to 23S rRNA. Forms part of two intersubunit bridges in the 70S ribosome. This chain is Large ribosomal subunit protein uL14, found in Corynebacterium diphtheriae (strain ATCC 700971 / NCTC 13129 / Biotype gravis).